A 1174-amino-acid polypeptide reads, in one-letter code: Probable pyruvate-flavodoxin oxidoreductase (1174 aa).

2 4Fe-4S ferredoxin-type domains span residues 680-709 (EIPIWKEELCTQCNHCVAACPHSAIRAKVV) and 736-765 (YVLQVAPEDCTGCNLCVEVCPAKDRQNPEI). Positions 689, 692, 695, 699, 745, 748, 751, 755, 819, 822, 847, and 1071 each coordinate [4Fe-4S] cluster.

The protein belongs to the pyruvate:ferredoxin/flavodoxin oxidoreductase family. Requires [4Fe-4S] cluster as cofactor.

The catalysed reaction is oxidized [flavodoxin] + pyruvate + CoA + 2 H(+) = reduced [flavodoxin] + acetyl-CoA + CO2. Functionally, oxidoreductase required for the transfer of electrons from pyruvate to flavodoxin. This is Probable pyruvate-flavodoxin oxidoreductase (ydbK) from Escherichia coli (strain K12).